The primary structure comprises 242 residues: ATP-dependent dethiobiotin synthetase BioD (242 aa).

12–17 provides a ligand contact to ATP; that stretch reads EVGKTV. Threonine 16 is a Mg(2+) binding site. Lysine 37 is a catalytic residue. Serine 41 provides a ligand contact to substrate. ATP is bound by residues aspartate 51 and 112–115; that span reads EGAG. 2 residues coordinate Mg(2+): aspartate 51 and glutamate 112.

The protein belongs to the dethiobiotin synthetase family. Homodimer. It depends on Mg(2+) as a cofactor.

It localises to the cytoplasm. It carries out the reaction (7R,8S)-7,8-diammoniononanoate + CO2 + ATP = (4R,5S)-dethiobiotin + ADP + phosphate + 3 H(+). It participates in cofactor biosynthesis; biotin biosynthesis; biotin from 7,8-diaminononanoate: step 1/2. Catalyzes a mechanistically unusual reaction, the ATP-dependent insertion of CO2 between the N7 and N8 nitrogen atoms of 7,8-diaminopelargonic acid (DAPA, also called 7,8-diammoniononanoate) to form a ureido ring. The protein is ATP-dependent dethiobiotin synthetase BioD of Bacillus cereus (strain AH820).